Here is a 287-residue protein sequence, read N- to C-terminus: tRNA selenocysteine 1-associated protein 1 (287 aa).

RRM domains are found at residues 3–86 and 96–175; these read ASLW…YATY and YSLF…VAIP.

It belongs to the RRM TRSPAP family. As to quaternary structure, component of the tRNA(Sec) complex composed at least of EEFSEC, SECISBP2, SEPHS1, SEPSECS, TRNAU1AP and tRNA(Sec). Associates with mRNP and/or polysomes. Found in a complex with tRNA(Sec). Interacts with SEPSECS. In terms of tissue distribution, ubiquitous.

The protein localises to the nucleus. It is found in the cytoplasm. In terms of biological role, involved in the early steps of selenocysteine biosynthesis and tRNA(Sec) charging to the later steps resulting in the cotranslational incorporation of selenocysteine into selenoproteins. Stabilizes the SECISBP2, EEFSEC and tRNA(Sec) complex. May be involved in the methylation of tRNA(Sec). Enhances efficiency of selenoproteins synthesis. The protein is tRNA selenocysteine 1-associated protein 1 (Trnau1ap) of Rattus norvegicus (Rat).